Consider the following 92-residue polypeptide: Pyrimidine/purine nucleoside phosphorylase (92 aa).

It belongs to the nucleoside phosphorylase PpnP family.

It carries out the reaction a purine D-ribonucleoside + phosphate = a purine nucleobase + alpha-D-ribose 1-phosphate. The enzyme catalyses adenosine + phosphate = alpha-D-ribose 1-phosphate + adenine. It catalyses the reaction cytidine + phosphate = cytosine + alpha-D-ribose 1-phosphate. The catalysed reaction is guanosine + phosphate = alpha-D-ribose 1-phosphate + guanine. It carries out the reaction inosine + phosphate = alpha-D-ribose 1-phosphate + hypoxanthine. The enzyme catalyses thymidine + phosphate = 2-deoxy-alpha-D-ribose 1-phosphate + thymine. It catalyses the reaction uridine + phosphate = alpha-D-ribose 1-phosphate + uracil. The catalysed reaction is xanthosine + phosphate = alpha-D-ribose 1-phosphate + xanthine. In terms of biological role, catalyzes the phosphorolysis of diverse nucleosides, yielding D-ribose 1-phosphate and the respective free bases. Can use uridine, adenosine, guanosine, cytidine, thymidine, inosine and xanthosine as substrates. Also catalyzes the reverse reactions. This Rhodopirellula baltica (strain DSM 10527 / NCIMB 13988 / SH1) protein is Pyrimidine/purine nucleoside phosphorylase.